Consider the following 585-residue polypeptide: Polyadenylate-binding protein, cytoplasmic and nuclear (585 aa).

Residues 14–37 are disordered; sequence QLKIEEQTAPTTTESETPKVETSG. RRM domains lie at 38-116, 126-203, 219-296, and 322-399; these read ASLY…WSQR, GNIY…LHVS, TNVY…RAQK, and VNLF…IAQR. Positions 488–567 constitute a PABC domain; that stretch reads GQFPRNGQQQ…AHAAYQKFKE (80 aa).

Belongs to the polyadenylate-binding protein type-1 family.

The protein localises to the cytoplasm. The protein resides in the nucleus. Its function is as follows. Binds the poly(A) tail of mRNA. Appears to be an important mediator of the multiple roles of the poly(A) tail in mRNA biogenesis, stability and translation. In the nucleus, involved in both mRNA cleavage and polyadenylation. Is also required for efficient mRNA export to the cytoplasm. Acts in concert with a poly(A)-specific nuclease (PAN) to affect poly(A) tail shortening, which may occur concomitantly with either nucleocytoplasmic mRNA transport or translational initiation. In the cytoplasm, stimulates translation initiation and regulates mRNA decay through translation termination-coupled poly(A) shortening, probably mediated by PAN. The polypeptide is Polyadenylate-binding protein, cytoplasmic and nuclear (PAB1) (Eremothecium gossypii (strain ATCC 10895 / CBS 109.51 / FGSC 9923 / NRRL Y-1056) (Yeast)).